The following is a 186-amino-acid chain: Periplasmic nitrate reductase, electron transfer subunit (186 aa).

The N-terminal stretch at 1–20 (MKTSKLNFLTLVASTGLALA) is a signal peptide. Heme c-binding residues include histidine 87, cysteine 102, cysteine 105, histidine 106, histidine 123, cysteine 144, cysteine 147, and histidine 148.

It belongs to the NapB family. In terms of assembly, component of the periplasmic nitrate reductase NapAB complex composed of NapA and NapB. Binds 2 heme C groups per subunit.

Its subcellular location is the periplasm. Electron transfer subunit of the periplasmic nitrate reductase complex NapAB. Transfers electrons to NapA subunit, thus allowing electron flow between membrane and periplasm. Essential for periplasmic nitrate reduction with nitrate as the terminal electron acceptor. In Wolinella succinogenes (strain ATCC 29543 / DSM 1740 / CCUG 13145 / JCM 31913 / LMG 7466 / NCTC 11488 / FDC 602W) (Vibrio succinogenes), this protein is Periplasmic nitrate reductase, electron transfer subunit.